We begin with the raw amino-acid sequence, 272 residues long: Acetylglutamate kinase (272 aa).

Residues 41 to 42 (GG), arginine 63, and asparagine 166 each bind substrate.

This sequence belongs to the acetylglutamate kinase family. ArgB subfamily.

The protein resides in the cytoplasm. The enzyme catalyses N-acetyl-L-glutamate + ATP = N-acetyl-L-glutamyl 5-phosphate + ADP. It participates in amino-acid biosynthesis; L-arginine biosynthesis; N(2)-acetyl-L-ornithine from L-glutamate: step 2/4. Its function is as follows. Catalyzes the ATP-dependent phosphorylation of N-acetyl-L-glutamate. In Anaeromyxobacter dehalogenans (strain 2CP-1 / ATCC BAA-258), this protein is Acetylglutamate kinase.